We begin with the raw amino-acid sequence, 252 residues long: Thiamine thiazole synthase (252 aa).

NAD(+) is bound by residues Ser35, 54–55, Gly62, Val126, and 152–154; these read EK and HVD. Residues Asp154 and His169 each contribute to the Fe cation site. Met217 is an NAD(+) binding site. Arg227 serves as a coordination point for glycine.

It belongs to the THI4 family. In terms of assembly, homooctamer; tetramer of dimers. Fe(2+) is required as a cofactor.

The catalysed reaction is hydrogen sulfide + glycine + NAD(+) = ADP-5-ethyl-4-methylthiazole-2-carboxylate + nicotinamide + 3 H2O + H(+). The protein operates within cofactor biosynthesis; thiamine diphosphate biosynthesis. Involved in the biosynthesis of the thiazole moiety of thiamine. Catalyzes the conversion of NAD and glycine to adenosine diphosphate 5-(2-hydroxyethyl)-4-methylthiazole-2-carboxylate (ADT), an adenylated thiazole intermediate, using free sulfide as a source of sulfur. This chain is Thiamine thiazole synthase, found in Pyrococcus horikoshii (strain ATCC 700860 / DSM 12428 / JCM 9974 / NBRC 100139 / OT-3).